The chain runs to 422 residues: Exodeoxyribonuclease 7 large subunit (422 aa).

This sequence belongs to the XseA family. Heterooligomer composed of large and small subunits.

Its subcellular location is the cytoplasm. It catalyses the reaction Exonucleolytic cleavage in either 5'- to 3'- or 3'- to 5'-direction to yield nucleoside 5'-phosphates.. Its function is as follows. Bidirectionally degrades single-stranded DNA into large acid-insoluble oligonucleotides, which are then degraded further into small acid-soluble oligonucleotides. The chain is Exodeoxyribonuclease 7 large subunit from Leptospira interrogans serogroup Icterohaemorrhagiae serovar copenhageni (strain Fiocruz L1-130).